A 463-amino-acid chain; its full sequence is Chromosomal replication initiator protein DnaA (463 aa).

The domain I, interacts with DnaA modulators stretch occupies residues 1 to 90; the sequence is MSLSLWQQCL…KPLSQIISQT (90 aa). A domain II region spans residues 91 to 126; sequence VTASVSAPSAPIVRVAAPSRPSWDNAAPQPELSYRS. The domain III, AAA+ region stretch occupies residues 127–343; the sequence is NVNPKHTFDN…GALNRVIANA (217 aa). The ATP site is built by Gly171, Gly173, Lys174, and Thr175. Positions 344–463 are domain IV, binds dsDNA; it reads NFTGRAITID…FSNLIRTLSS (120 aa).

This sequence belongs to the DnaA family. As to quaternary structure, oligomerizes as a right-handed, spiral filament on DNA at oriC.

The protein resides in the cytoplasm. Its function is as follows. Plays an essential role in the initiation and regulation of chromosomal replication. ATP-DnaA binds to the origin of replication (oriC) to initiate formation of the DNA replication initiation complex once per cell cycle. Binds the DnaA box (a 9 base pair repeat at the origin) and separates the double-stranded (ds)DNA. Forms a right-handed helical filament on oriC DNA; dsDNA binds to the exterior of the filament while single-stranded (ss)DNA is stabiized in the filament's interior. The ATP-DnaA-oriC complex binds and stabilizes one strand of the AT-rich DNA unwinding element (DUE), permitting loading of DNA polymerase. After initiation quickly degrades to an ADP-DnaA complex that is not apt for DNA replication. Binds acidic phospholipids. The chain is Chromosomal replication initiator protein DnaA from Serratia proteamaculans (strain 568).